The following is a 367-amino-acid chain: Protein-glutamate methylesterase/protein-glutamine glutaminase 2 (367 aa).

The 118-residue stretch at 15–132 folds into the Response regulatory domain; sequence RALIVDDSAL…SQSMHEMAEE (118 aa). Position 66 is a 4-aspartylphosphate (D66). The 196-residue stretch at 172–367 folds into the CheB-type methylesterase domain; it reads KTSVRNVLAI…MADEIVKIVR (196 aa). Residues S184, H211, and D311 contribute to the active site.

The protein belongs to the CheB family. Post-translationally, phosphorylated by CheA. Phosphorylation of the N-terminal regulatory domain activates the methylesterase activity.

The protein resides in the cytoplasm. It carries out the reaction [protein]-L-glutamate 5-O-methyl ester + H2O = L-glutamyl-[protein] + methanol + H(+). The catalysed reaction is L-glutaminyl-[protein] + H2O = L-glutamyl-[protein] + NH4(+). In terms of biological role, involved in chemotaxis. Part of a chemotaxis signal transduction system that modulates chemotaxis in response to various stimuli. Catalyzes the demethylation of specific methylglutamate residues introduced into the chemoreceptors (methyl-accepting chemotaxis proteins or MCP) by CheR. Also mediates the irreversible deamidation of specific glutamine residues to glutamic acid. This chain is Protein-glutamate methylesterase/protein-glutamine glutaminase 2, found in Methanosarcina mazei (strain ATCC BAA-159 / DSM 3647 / Goe1 / Go1 / JCM 11833 / OCM 88) (Methanosarcina frisia).